Reading from the N-terminus, the 396-residue chain is ATP-dependent RNA helicase FAL1 (396 aa).

Positions 23 to 51 (PTFEALNLKEDLLRGIYAYNFEKPSAIQQ) match the Q motif motif. The Helicase ATP-binding domain occupies 54 to 224 (IIPIIRGRDV…TKFMTDPVRI (171 aa)). 67-74 (AQSGTGKT) is an ATP binding site. The DEAD box motif lies at 172 to 175 (DESD). In terms of domain architecture, Helicase C-terminal spans 235 to 396 (GIKQFFVAVE…EMPMNVAELT (162 aa)).

It belongs to the DEAD box helicase family. DDX48/FAL1 subfamily.

It is found in the nucleus. Its subcellular location is the nucleolus. The catalysed reaction is ATP + H2O = ADP + phosphate + H(+). ATP-dependent RNA helicase involved in 40S ribosomal subunit biogenesis. Required for the processing and cleavage of 35S pre-rRNA at sites A0, A1, and A2, leading to mature 18S rRNA. The sequence is that of ATP-dependent RNA helicase FAL1 (FAL1) from Cryptococcus neoformans var. neoformans serotype D (strain B-3501A) (Filobasidiella neoformans).